The following is a 523-amino-acid chain: MNKAINIKKTAPLEVLHSELPYTQDPTALFHALCAGRSDCLLLESAEIDSKQNLKSLLLVDAAVRIVCEGHQVTYHALSANGQALLNIIHSNLTDRIPCKVEKAKLTLTFSTPCDTLDEDSRLREASSFDALRLVQHSFDLTDHGKFALFLGGLFAYDLVANFEPLGEAPADNQCPDYVFYVAETLMVIDHQRETCQLQATQFQPGDALHSQLKSRMREIRAQVNQKLPLPSAQSLSDVEVTTNISDAAFCDIVRDLKQYVVKGDVFQVVPSRRFRLPCPSPLAAYQRLKQSNPSPYMFYMQDERFTLFGASPESALKYEMHTNQVEIYPIAGTRRRGKRADGSIDFDLDSRIELELRTDKKENAEHMMLVDLARNDVARISQAGTRHVADLLQVDRYSHVMHLVSRVVGQLREDLDALHAYQACMNMGTLTGAPKIRAMQLIRDVEQARRGSYGGAVGYLTGEGDLDTCIVIRSAYVENGIAQVQAGAGVVYDSDPQAEADETRGKAQAVISAILYAHQGKE.

Residues serine 45 and 296–298 (PYM) each bind L-tryptophan. Chorismate is bound at residue 333–334 (GT). Glutamate 366 is a binding site for Mg(2+). Chorismate-binding positions include tyrosine 454, arginine 474, 488–490 (GAG), and glycine 490. Glutamate 503 contributes to the Mg(2+) binding site.

This sequence belongs to the anthranilate synthase component I family. As to quaternary structure, heterotetramer consisting of two non-identical subunits: a beta subunit (TrpG) and a large alpha subunit (TrpE). It depends on Mg(2+) as a cofactor.

The enzyme catalyses chorismate + L-glutamine = anthranilate + pyruvate + L-glutamate + H(+). The protein operates within amino-acid biosynthesis; L-tryptophan biosynthesis; L-tryptophan from chorismate: step 1/5. Its activity is regulated as follows. Feedback inhibited by tryptophan. Part of a heterotetrameric complex that catalyzes the two-step biosynthesis of anthranilate, an intermediate in the biosynthesis of L-tryptophan. In the first step, the glutamine-binding beta subunit (TrpG) of anthranilate synthase (AS) provides the glutamine amidotransferase activity which generates ammonia as a substrate that, along with chorismate, is used in the second step, catalyzed by the large alpha subunit of AS (TrpE) to produce anthranilate. In the absence of TrpG, TrpE can synthesize anthranilate directly from chorismate and high concentrations of ammonia. In Vibrio cholerae serotype O1 (strain ATCC 39315 / El Tor Inaba N16961), this protein is Anthranilate synthase component 1 (trpE).